Here is a 201-residue protein sequence, read N- to C-terminus: Large ribosomal subunit protein bL9 (201 aa).

A compositionally biased stretch (basic and acidic residues) spans 150–165; that stretch reads EAERQAAGEDLTQRRD. The disordered stretch occupies residues 150–201; that stretch reads EAERQAAGEDLTQRRDDEEEEAVEAAEFFESEELAPGDEEEEAAGEEEDAKE. Acidic residues predominate over residues 166–201; that stretch reads DEEEEAVEAAEFFESEELAPGDEEEEAAGEEEDAKE.

This sequence belongs to the bacterial ribosomal protein bL9 family.

Binds to the 23S rRNA. The chain is Large ribosomal subunit protein bL9 from Parvibaculum lavamentivorans (strain DS-1 / DSM 13023 / NCIMB 13966).